Here is a 247-residue protein sequence, read N- to C-terminus: MTHSTLPPRPFAILAMRRTGTHYLEELVNEHPNVLSNGELLNTYDTNWPDKERLLLSDRELLERACWRYPPHSDKKVTHVGCKINEPQFQERPSFFAELTAWPGLKVILVIRRNTLESLRSFVQARQTRQWLQFKSDSSAPPPPVMLPFATCEAYFKAADDFHARVVNAFDSSRIRLIEYERLLRDPVPCVATVLDFLGAPALQLADRGILRRQETRPLDQTVRNFHELRVHFANGPYARFFELAND.

Positions 1-16 (MTHSTLPPRPFAILAM) are hydrophobic.

Its function is as follows. Required for the formation of sulfated nod factor. Proposed to transfer activated sulfate (PAPS) to a N-acetylglucosamine of the nod factor. The protein is Nodulation protein H (nodH) of Rhizobium meliloti (Ensifer meliloti).